Here is a 304-residue protein sequence, read N- to C-terminus: Glycine--tRNA ligase alpha subunit (304 aa).

This sequence belongs to the class-II aminoacyl-tRNA synthetase family. As to quaternary structure, tetramer of two alpha and two beta subunits.

Its subcellular location is the cytoplasm. The enzyme catalyses tRNA(Gly) + glycine + ATP = glycyl-tRNA(Gly) + AMP + diphosphate. The protein is Glycine--tRNA ligase alpha subunit of Tolumonas auensis (strain DSM 9187 / NBRC 110442 / TA 4).